A 416-amino-acid polypeptide reads, in one-letter code: Fusaric acid cluster transcription factor FUB10 (416 aa).

The segment at residues 16-47 (CDRCRAQKLRCHRDSGHSTDACLRCLKSGIEC) is a DNA-binding region (zn(2)-C6 fungal-type). The tract at residues 50–92 (SKARPTGRPPSRQVQPTVSVEQGDTSSSSHTTDSSPSAGGTDI) is disordered. Over residues 61 to 73 (RQVQPTVSVEQGD) the composition is skewed to polar residues. Positions 74-86 (TSSSSHTTDSSPS) are enriched in low complexity.

It localises to the nucleus. Transcription factor that regulates the expression of the gene cluster that mediates the biosynthesis of fusaric acid, a mycotoxin with low to moderate toxicity to animals and humans, but with high phytotoxic properties. This is Fusaric acid cluster transcription factor FUB10 from Fusarium oxysporum f. sp. lycopersici (strain 4287 / CBS 123668 / FGSC 9935 / NRRL 34936) (Fusarium vascular wilt of tomato).